The primary structure comprises 117 residues: Immunoglobulin heavy variable 3-11 (117 aa).

The signal sequence occupies residues 1–19 (MEFGLSWVFLVAIIKGVQC). Pyrrolidone carboxylic acid is present on glutamine 20. Positions 20–44 (QVQLVESGGGLVKPGGSLRLSCAAS) are framework-1. Residues 20–117 (QVQLVESGGG…EDTAVYYCAR (98 aa)) enclose the Ig-like domain. Cysteine 41 and cysteine 115 are oxidised to a cystine. Residues 45 to 52 (GFTFSDYY) form a complementarity-determining-1 region. Residues 53–69 (MSWIRQAPGKGLEWVSY) are framework-2. A complementarity-determining-2 region spans residues 70–77 (ISSSSSYT). The framework-3 stretch occupies residues 78-115 (NYADSVKGRFTISRDNAKNSLYLQMNSLRAEDTAVYYC). The tract at residues 116-117 (AR) is complementarity-determining-3.

As to quaternary structure, immunoglobulins are composed of two identical heavy chains and two identical light chains; disulfide-linked.

It localises to the secreted. The protein resides in the cell membrane. Functionally, v region of the variable domain of immunoglobulin heavy chains that participates in the antigen recognition. Immunoglobulins, also known as antibodies, are membrane-bound or secreted glycoproteins produced by B lymphocytes. In the recognition phase of humoral immunity, the membrane-bound immunoglobulins serve as receptors which, upon binding of a specific antigen, trigger the clonal expansion and differentiation of B lymphocytes into immunoglobulins-secreting plasma cells. Secreted immunoglobulins mediate the effector phase of humoral immunity, which results in the elimination of bound antigens. The antigen binding site is formed by the variable domain of one heavy chain, together with that of its associated light chain. Thus, each immunoglobulin has two antigen binding sites with remarkable affinity for a particular antigen. The variable domains are assembled by a process called V-(D)-J rearrangement and can then be subjected to somatic hypermutations which, after exposure to antigen and selection, allow affinity maturation for a particular antigen. The protein is Immunoglobulin heavy variable 3-11 of Homo sapiens (Human).